Here is a 56-residue protein sequence, read N- to C-terminus: Defensin-1 (56 aa).

The first 24 residues, 1 to 24 (MKAIVVLLILALILCLYAMTTVEG), serve as a signal peptide directing secretion. Intrachain disulfides connect cysteine 26/cysteine 45, cysteine 31/cysteine 53, and cysteine 35/cysteine 55.

It is found in the secreted. Its function is as follows. Antibacterial protein involved in the immune response to septic injury. When combined with 14.026 kDa and 14.059 kDa hemolymph antimicrobial peptides, it has a strong cooperative activity against the Gram-positive bacteria B.subtilis and S.aureus, and against the Gram-negative bacteria E.coli DH5-alpha and K.pneumoniae ATCC 138833. Does not show detectable antibacterial activity when present alone. Has no hemolytic activity in human erythrocytes. The protein is Defensin-1 of Centruroides limpidus (Mexican scorpion).